We begin with the raw amino-acid sequence, 232 residues long: Noggin (232 aa).

A signal peptide spans 1–27; that stretch reads MERCPSLGVTLYALVVVLGLRATPAGG. Residue Asn-62 is glycosylated (N-linked (GlcNAc...) asparagine). The segment at 77 to 96 is disordered; it reads GFMATSPPEDRPGGGGGAAG. Intrachain disulfides connect Cys-155/Cys-192, Cys-178/Cys-228, Cys-184/Cys-230, and Cys-207/Cys-215.

The protein belongs to the noggin family. In terms of assembly, homodimer. Interacts with GDF5; inhibits chondrocyte differentiation.

The protein resides in the secreted. Inhibitor of bone morphogenetic proteins (BMP) signaling which is required for growth and patterning of the neural tube and somite. Essential for cartilage morphogenesis and joint formation. Inhibits chondrocyte differentiation through its interaction with GDF5 and, probably, GDF6. This Homo sapiens (Human) protein is Noggin (NOG).